The primary structure comprises 497 residues: Zinc finger protein 3 (497 aa).

Residues 1–20 (MGTEKKEGLPKEETSEDSKP) show a composition bias toward basic and acidic residues. A disordered region spans residues 1–53 (MGTEKKEGLPKEETSEDSKPHGQTVEKLAQEVCHGHEFGEASEEDMSEGHLRE). Residues lysine 6 and lysine 11 each participate in a glycyl lysine isopeptide (Lys-Gly) (interchain with G-Cter in SUMO2) cross-link. C2H2-type zinc fingers lie at residues 136 to 158 (HTCK…MRVH), 164 to 186 (FECK…QRIH), 192 to 214 (FACT…HRIH), 220 to 242 (YKCE…QRIH), 248 to 270 (YECN…QRIH), 276 to 298 (HECS…QKIH), 304 to 326 (YLCN…QRIH), 332 to 354 (YECS…IRIH), 360 to 382 (YVCK…ERIH), 388 to 410 (YECF…QRIH), 416 to 438 (HQCN…QKIH), 444 to 466 (YECS…QRIH), and 472 to 494 (YECQ…QSVH).

The protein belongs to the krueppel C2H2-type zinc-finger protein family.

The protein resides in the nucleus. May be involved in transcriptional regulation. The chain is Zinc finger protein 3 (Zfp3) from Mus musculus (Mouse).